We begin with the raw amino-acid sequence, 412 residues long: MQIYLVGGAVRDQLLNLPIKDRDFLVVGATAKELINQGYQQVGADFPVFLHPVTQQEYALARQERKSGTGYTGFVCDFSPNVTLEQDLIRRDLTINAMAQDLTSGQIFDPFGGKTDLANRLLRHISDAFAEDPLRVLRVARFAARFHHLGFSIAEQTLELMQKMTACGELNHLTAERIWRETEKALHTESPHIYFQVLRKVNALAILFPEIDQLFGQIQSVKYHLETDRGQHTLLALQQAKLLVKQAHNPTALLWAVLCHDLGKDLISAEMLPHHYQPNVTGIQLTHQLADRLKVPTAVKELALLVNKYHTNCHKIAELDSERVLELFNQLDVWRKPQRLDDFLLACEADARARLGAEYCSYPQATLAIDYFNAANAVNVQAIIADGFKKQAIRDELNNRRINIIKQIKNAI.

Positions 8 and 11 each coordinate ATP. CTP-binding residues include Gly8 and Arg11. The Mg(2+) site is built by Asp21 and Asp23. 3 residues coordinate ATP: Arg91, Arg138, and Arg141. Positions 91, 138, and 141 each coordinate CTP. Residues 229–334 enclose the HD domain; the sequence is RGQHTLLALQ…LELFNQLDVW (106 aa).

This sequence belongs to the tRNA nucleotidyltransferase/poly(A) polymerase family. Bacterial CCA-adding enzyme type 1 subfamily. As to quaternary structure, monomer. Can also form homodimers and oligomers. Mg(2+) serves as cofactor. Requires Ni(2+) as cofactor.

It carries out the reaction a tRNA precursor + 2 CTP + ATP = a tRNA with a 3' CCA end + 3 diphosphate. The catalysed reaction is a tRNA with a 3' CCA end + 2 CTP + ATP = a tRNA with a 3' CCACCA end + 3 diphosphate. In terms of biological role, catalyzes the addition and repair of the essential 3'-terminal CCA sequence in tRNAs without using a nucleic acid template. Adds these three nucleotides in the order of C, C, and A to the tRNA nucleotide-73, using CTP and ATP as substrates and producing inorganic pyrophosphate. tRNA 3'-terminal CCA addition is required both for tRNA processing and repair. Also involved in tRNA surveillance by mediating tandem CCA addition to generate a CCACCA at the 3' terminus of unstable tRNAs. While stable tRNAs receive only 3'-terminal CCA, unstable tRNAs are marked with CCACCA and rapidly degraded. This is Multifunctional CCA protein from Haemophilus ducreyi (strain 35000HP / ATCC 700724).